A 97-amino-acid polypeptide reads, in one-letter code: Nuclear protein 2 (97 aa).

Positions 76 to 97 (LLNGQRKRRQRQLHPKMRTRLT) are disordered. Basic residues predominate over residues 80–97 (QRKRRQRQLHPKMRTRLT).

It belongs to the NUPR family.

The protein resides in the nucleus. In terms of biological role, acts as a transcriptional repressor by inhibiting gene expression at the NUPR1 promoter in a p53/TP53-dependent manner in cancer cells. Involved in the G1 cell cycle arrest, and in a decrease in cell viability and cell proliferation. Plays a role as a negative regulator of the protumoral factor NUPR1. The polypeptide is Nuclear protein 2 (Homo sapiens (Human)).